The sequence spans 229 residues: uncharacterized protein (229 aa).

The disordered stretch occupies residues Met1 to Arg102. Over residues Ala73 to Ala94 the composition is skewed to basic residues. A run of 2 helical transmembrane segments spans residues Leu137–Leu157 and Leu159–Leu179.

It is found in the cell membrane. This is an uncharacterized protein from Mycobacterium leprae (strain TN).